Here is a 1943-residue protein sequence, read N- to C-terminus: Trichohyalin (1943 aa).

Residues 1–91 (MSPLLRSICD…AQACYYALGQ (91 aa)) form an S-100-like region. EF-hand domains are found at residues 23–48 (CDGA…LRRP) and 49–84 (HDPK…VAQA). Ca(2+) is bound by residues Asp-32, Asp-62, Asp-64, Asn-66, Arg-68, and Glu-73. Disordered regions lie at residues 110 to 164 (LQDR…LEQR), 186 to 209 (RRAE…DEEQ), and 222 to 274 (GREE…LQEE). The segment covering 197–209 (KGHETEEFPDEEQ) has biased composition (basic and acidic residues). A 1-1; approximate repeat occupies 314 to 326 (RREQQEERREQQE). The tract at residues 314 to 377 (RREQQEERRE…QEEERREQQL (64 aa)) is 5 X 13 AA tandem repeats of R-R-E-Q-E-E-E-R-R-E-Q-Q-L. One copy of the 1-2; approximate repeat lies at 327–339 (RREQQEERREQQL). A 1-3; approximate repeat occupies 340–351 (RREQEERREQQL). 10 repeat units span residues 352–364 (RREQ…EQQL), 365–377 (RREQ…EQQL), 378–383 (RREQQL), 384–389 (RREQQL), 390–395 (RREQQL), 396–401 (RREQQL), 402–407 (RREQQL), 408–413 (RREQQL), 414–419 (RREQQL), and 420–425 (RREQQL). The segment at 378-425 (RREQQLRREQQLRREQQLRREQQLRREQQLRREQQLRREQQLRREQQL) is 8 X 6 AA tandem repeats of R-R-E-Q-Q-L. Residues 425–683 (LRREQEEERH…REHEEERREQ (259 aa)) are 9 X 28 AA approximate tandem repeats. Disordered stretches follow at residues 426–485 (RREQ…EERR), 509–546 (REQE…EERR), 608–819 (ERLE…EKEQ), and 837–872 (EEQL…RRDQ). Composition is skewed to basic and acidic residues over residues 608-684 (ERLE…REQE), 724-781 (RKQE…ERGR), 789-812 (PLRE…RFLP), and 859-872 (DQER…RRDQ). A run of 10 repeats spans residues 906–935 (LQEE…EEEQ), 936–965 (LQQE…KDKK), 966–995 (LQQK…EEEE), 996–1025 (LQQE…KKDE), 1026–1055 (LQQE…EEEE), 1056–1085 (LQQE…KEEE), 1086–1115 (LQQE…EEEE), 1116–1145 (LQQE…EEEE), 1146–1175 (VQQE…EEEE), and 1176–1204 (LQQE…EEEE). Residues 906 to 1204 (LQEEEEELQR…RERQYREEEE (299 aa)) form a 10 X 30 AA tandem repeats region. Positions 950–992 (KRRRQERERQYRKDKKLQQKEEQLLGEEPEKRRRQEREKKYRE) are enriched in basic and acidic residues. 9 disordered regions span residues 950–1000 (KRRR…QQEE), 1046–1120 (RERQ…QQEE), 1137–1162 (ERQY…EKRR), 1193–1371 (QERE…RHQE), 1404–1435 (REQQ…FREE), 1492–1691 (QQLR…ERDR), 1757–1820 (PERE…RDGK), 1834–1864 (EQRL…EQEL), and 1876–1928 (RERK…VRSS). Residues 1052–1064 (EEEELQQEEEQLL) show a composition bias toward acidic residues. Composition is skewed to basic and acidic residues over residues 1065–1085 (GEER…KEEE) and 1092–1111 (QLLR…RQCR). The span at 1142–1151 (EEEEVQQEEE) shows a compositional bias: acidic residues. Residues 1152–1162 (QLLREEPEKRR) are compositionally biased toward basic and acidic residues. Basic and acidic residues-rich tracts occupy residues 1214-1263 (YRDE…DRQS) and 1274-1371 (QQER…RHQE). Residues 1292-1894 (HFPEEEQLER…IRRQQKEEQR (603 aa)) are 23 X 26 AA approximate tandem repeats. Composition is skewed to basic and acidic residues over residues 1492–1524 (QQLR…EQQL), 1533–1673 (FLQE…REEE), and 1682–1691 (QQLRRQERDR). The segment covering 1876–1912 (RERKLREEHIRRQQKEEQRHRQVGEIKSQEGKGHGRL) has biased composition (basic and acidic residues).

Belongs to the S100-fused protein family. In terms of assembly, monomer. In terms of processing, substrate of transglutaminase. Some 200 arginines are probably converted to citrullines by peptidylarginine deimidase. As to expression, found in the hard keratinizing tissues such as the inner root sheath (IRS) of hair follicles and medulla, and in the filiform papillae of dorsal tongue epithelium.

Its function is as follows. Intermediate filament-associated protein that associates in regular arrays with keratin intermediate filaments (KIF) of the inner root sheath cells of the hair follicle and the granular layer of the epidermis. It later becomes cross-linked to KIF by isodipeptide bonds. It may serve as scaffold protein, together with involucrin, in the organization of the cell envelope or even anchor the cell envelope to the KIF network. It may be involved in its own calcium-dependent postsynthetic processing during terminal differentiation. The sequence is that of Trichohyalin (TCHH) from Homo sapiens (Human).